Reading from the N-terminus, the 97-residue chain is YcgL domain-containing protein CKO_01183 (97 aa).

One can recognise a YcgL domain in the interval 1 to 85; sequence MFCVIYRSSK…PPEDLLKQHL (85 aa). The tract at residues 74–97 is disordered; the sequence is PPPPEDLLKQHLSAPGENKPDAKS.

The chain is YcgL domain-containing protein CKO_01183 from Citrobacter koseri (strain ATCC BAA-895 / CDC 4225-83 / SGSC4696).